An 833-amino-acid polypeptide reads, in one-letter code: Leucine--tRNA ligase (833 aa).

Residues 41–52 (PYPSGAGLHVGH) carry the 'HIGH' region motif. The short motif at 610-614 (KMSKS) is the 'KMSKS' region element. Residue K613 coordinates ATP.

The protein belongs to the class-I aminoacyl-tRNA synthetase family.

The protein resides in the cytoplasm. It catalyses the reaction tRNA(Leu) + L-leucine + ATP = L-leucyl-tRNA(Leu) + AMP + diphosphate. The sequence is that of Leucine--tRNA ligase from Streptococcus agalactiae serotype Ia (strain ATCC 27591 / A909 / CDC SS700).